The sequence spans 349 residues: PhoH-like protein (349 aa).

147–154 is an ATP binding site; sequence GPAGTGKT.

This sequence belongs to the PhoH family.

It is found in the cytoplasm. The sequence is that of PhoH-like protein from Mycobacterium leprae (strain TN).